The sequence spans 312 residues: Malate dehydrogenase (312 aa).

NAD(+) contacts are provided by residues 12-17 (GAGFTG) and D36. Positions 87 and 93 each coordinate substrate. Residues N100 and 123-125 (LTN) each bind NAD(+). N125 provides a ligand contact to substrate. At S149 the chain carries Phosphoserine. Position 156 (R156) interacts with substrate. H180 serves as the catalytic Proton acceptor.

It belongs to the LDH/MDH superfamily. MDH type 3 family.

It carries out the reaction (S)-malate + NAD(+) = oxaloacetate + NADH + H(+). Functionally, catalyzes the reversible oxidation of malate to oxaloacetate. The polypeptide is Malate dehydrogenase (Geobacillus thermodenitrificans).